A 90-amino-acid polypeptide reads, in one-letter code: Probable Fe(2+)-trafficking protein (90 aa).

This sequence belongs to the Fe(2+)-trafficking protein family.

In terms of biological role, could be a mediator in iron transactions between iron acquisition and iron-requiring processes, such as synthesis and/or repair of Fe-S clusters in biosynthetic enzymes. The sequence is that of Probable Fe(2+)-trafficking protein from Ectopseudomonas mendocina (strain ymp) (Pseudomonas mendocina).